The following is a 329-amino-acid chain: Porphobilinogen deaminase (329 aa).

C250 carries the post-translational modification S-(dipyrrolylmethanemethyl)cysteine.

The protein belongs to the HMBS family. Monomer. Dipyrromethane serves as cofactor.

The catalysed reaction is 4 porphobilinogen + H2O = hydroxymethylbilane + 4 NH4(+). Its pathway is porphyrin-containing compound metabolism; protoporphyrin-IX biosynthesis; coproporphyrinogen-III from 5-aminolevulinate: step 2/4. Tetrapolymerization of the monopyrrole PBG into the hydroxymethylbilane pre-uroporphyrinogen in several discrete steps. The protein is Porphobilinogen deaminase of Burkholderia mallei (strain NCTC 10247).